Consider the following 126-residue polypeptide: Glycerol dehydrogenase small subunit (126 aa).

Helical transmembrane passes span Trp-13 to Gly-33, Gly-41 to Met-61, Ala-67 to Phe-87, and Leu-92 to Val-112.

Its subcellular location is the cell membrane. It carries out the reaction glycerol + A = dihydroxyacetone + AH2. Functionally, catalyzes the oxidation of glycerol to glycerone. Also acts, more slowly, on a number of other polyols including D-sorbitol, D-arabinitol, D-mannitol, meso-erythritol, adonitol and propylene glycol. The chain is Glycerol dehydrogenase small subunit (sldB) from Gluconobacter thailandicus.